The chain runs to 397 residues: Proteasome-activating nucleotidase (397 aa).

A coiled-coil region spans residues 12–58 (GYEDYITFLKRRIRQLELQVRTLEADKERLERELSRLRTEMSRLRQP). Residues 182-187 (GCGKTL) and His321 contribute to the ATP site. Positions 395-397 (MYG) are docks into pockets in the proteasome alpha-ring to cause gate opening.

The protein belongs to the AAA ATPase family. Homohexamer. The hexameric complex has a two-ring architecture resembling a top hat that caps the 20S proteasome core at one or both ends. Upon ATP-binding, the C-terminus of PAN interacts with the alpha-rings of the proteasome core by binding to the intersubunit pockets.

The protein localises to the cytoplasm. In terms of biological role, ATPase which is responsible for recognizing, binding, unfolding and translocation of substrate proteins into the archaeal 20S proteasome core particle. Is essential for opening the gate of the 20S proteasome via an interaction with its C-terminus, thereby allowing substrate entry and access to the site of proteolysis. Thus, the C-termini of the proteasomal ATPase function like a 'key in a lock' to induce gate opening and therefore regulate proteolysis. Unfolding activity requires energy from ATP hydrolysis, whereas ATP binding alone promotes ATPase-20S proteasome association which triggers gate opening, and supports translocation of unfolded substrates. In Thermococcus gammatolerans (strain DSM 15229 / JCM 11827 / EJ3), this protein is Proteasome-activating nucleotidase.